The primary structure comprises 156 residues: ATP synthase subunit b (156 aa).

Residues 1–21 (MSINATLLIQIIAFVLLIWFV) form a helical membrane-spanning segment.

It belongs to the ATPase B chain family. In terms of assembly, F-type ATPases have 2 components, F(1) - the catalytic core - and F(0) - the membrane proton channel. F(1) has five subunits: alpha(3), beta(3), gamma(1), delta(1), epsilon(1). F(0) has three main subunits: a(1), b(2) and c(10-14). The alpha and beta chains form an alternating ring which encloses part of the gamma chain. F(1) is attached to F(0) by a central stalk formed by the gamma and epsilon chains, while a peripheral stalk is formed by the delta and b chains.

Its subcellular location is the cell inner membrane. Functionally, f(1)F(0) ATP synthase produces ATP from ADP in the presence of a proton or sodium gradient. F-type ATPases consist of two structural domains, F(1) containing the extramembraneous catalytic core and F(0) containing the membrane proton channel, linked together by a central stalk and a peripheral stalk. During catalysis, ATP synthesis in the catalytic domain of F(1) is coupled via a rotary mechanism of the central stalk subunits to proton translocation. Component of the F(0) channel, it forms part of the peripheral stalk, linking F(1) to F(0). The sequence is that of ATP synthase subunit b from Hydrogenovibrio crunogenus (strain DSM 25203 / XCL-2) (Thiomicrospira crunogena).